The sequence spans 465 residues: Clusterin-like protein 1 (465 aa).

Residues 1-20 (MKPPILVFIVYLLQLRDCQC) form the signal peptide. Residues 62–107 (LMERREEEHSKLMRTLKKCREEKQEALKLMNEVQEHLEEEERLCQV) adopt a coiled-coil conformation. Intrachain disulfides connect C105/C333, C116/C325, C119/C322, C124/C315, and C131/C305. N-linked (GlcNAc...) asparagine glycosylation is found at N196 and N257. Residues 280–300 (LSKQDKDSAHGGPSSTTWPVR) form a disordered region. 4 N-linked (GlcNAc...) asparagine glycosylation sites follow: N311, N351, N412, and N430.

The protein belongs to the clusterin family.

The protein resides in the secreted. The polypeptide is Clusterin-like protein 1 (Bos taurus (Bovine)).